Reading from the N-terminus, the 37-residue chain is MKVRASVKRICRNCKIIKRSGTIRVICKDARHKQKQG.

This sequence belongs to the bacterial ribosomal protein bL36 family.

This chain is Large ribosomal subunit protein bL36, found in Legionella pneumophila subsp. pneumophila (strain Philadelphia 1 / ATCC 33152 / DSM 7513).